The chain runs to 304 residues: Calmodulin-lysine N-methyltransferase (304 aa).

The protein belongs to the class I-like SAM-binding methyltransferase superfamily. CLNMT methyltransferase family. As to quaternary structure, monomer. Expressed in discreet spatial and tissue-specific patterns including root tips, leaves-tips, floral buds, stamens, hydathodes, stigma, anther, siliques, apical meristems and germinating seeds. Also observed at high levels in the root stele region.

The protein resides in the cytoplasm. Its subcellular location is the nucleus. The catalysed reaction is [calmodulin]-L-lysine + S-adenosyl-L-methionine = [calmodulin]-N(6)-methyl-L-lysine + S-adenosyl-L-homocysteine + H(+). Its function is as follows. Catalyzes the trimethylation of calmodulin. Regulates roots development probably by modulating auxin signaling responses. May be involved in gravitropism. Involved in abscisic acid (ABA)-mediated and abiotic stress responses, including salt (NaCl), cold, drought and heat stresses. The protein is Calmodulin-lysine N-methyltransferase of Arabidopsis thaliana (Mouse-ear cress).